The sequence spans 1361 residues: uncharacterized protein (1361 aa).

It belongs to the IIV-6 261R/396L/443R family.

This is an uncharacterized protein from Invertebrate iridescent virus 6 (IIV-6).